The following is a 394-amino-acid chain: ORC1-type DNA replication protein 3 (394 aa).

Residues 66-70 (TGKTF) and tyrosine 207 each bind ATP.

It belongs to the CDC6/cdc18 family. Monomer. Interacts with Cdc6-1, Cdc6-2, MCM and PolB1.

Functionally, involved in regulation of DNA replication. May play essential roles in origin recognition and cell cycle control of replication. Binds to DNA, with a preference for molecules that contain a bubble, a fork, or a tail. Inhibits the binding of the MCM helicase to the origin DNA and inhibits its DNA helicase activity. Also regulates the DNA polymerase and the nuclease activities of PolB1. Inhibits the DNA-binding activity of Cdc6-1 and Cdc6-2. The protein is ORC1-type DNA replication protein 3 (cdc6-3) of Saccharolobus solfataricus (strain ATCC 35092 / DSM 1617 / JCM 11322 / P2) (Sulfolobus solfataricus).